Here is a 224-residue protein sequence, read N- to C-terminus: MNPAWALLRLASPQLPIGGYSYSQGLEMAVEQQRVNDQASARRWISDQLLLNLARFEAPLLLAHCQAAADQDWARLQQLSEEHRASRETRELYQESRQMGYSLKQLLEGLPELDSDARELLTHQDEPHLALGWALAARAWGISPADALAAWLWSWLENQLAVLMKTLPLGQQAAQRLTSELLPLLQQAQHHAANLDPNHHGSAAFGLSLASMAHERQYSRLFRS.

This sequence belongs to the UreF family. As to quaternary structure, ureD, UreF and UreG form a complex that acts as a GTP-hydrolysis-dependent molecular chaperone, activating the urease apoprotein by helping to assemble the nickel containing metallocenter of UreC. The UreE protein probably delivers the nickel.

It is found in the cytoplasm. In terms of biological role, required for maturation of urease via the functional incorporation of the urease nickel metallocenter. The chain is Urease accessory protein UreF from Pseudomonas fluorescens (strain ATCC BAA-477 / NRRL B-23932 / Pf-5).